The chain runs to 356 residues: S-adenosylmethionine:tRNA ribosyltransferase-isomerase (356 aa).

The protein belongs to the QueA family. Monomer.

It localises to the cytoplasm. It catalyses the reaction 7-aminomethyl-7-carbaguanosine(34) in tRNA + S-adenosyl-L-methionine = epoxyqueuosine(34) in tRNA + adenine + L-methionine + 2 H(+). The protein operates within tRNA modification; tRNA-queuosine biosynthesis. Transfers and isomerizes the ribose moiety from AdoMet to the 7-aminomethyl group of 7-deazaguanine (preQ1-tRNA) to give epoxyqueuosine (oQ-tRNA). The protein is S-adenosylmethionine:tRNA ribosyltransferase-isomerase of Shigella boydii serotype 18 (strain CDC 3083-94 / BS512).